Consider the following 325-residue polypeptide: Biotin synthase (325 aa).

Residues 49–267 (TQVQISTLLS…IAAARISMPR (219 aa)) enclose the Radical SAM core domain. [4Fe-4S] cluster contacts are provided by Cys-64, Cys-68, and Cys-71. Residues Cys-108, Cys-139, Cys-199, and Arg-271 each coordinate [2Fe-2S] cluster.

This sequence belongs to the radical SAM superfamily. Biotin synthase family. As to quaternary structure, homodimer. [4Fe-4S] cluster serves as cofactor. Requires [2Fe-2S] cluster as cofactor.

The enzyme catalyses (4R,5S)-dethiobiotin + (sulfur carrier)-SH + 2 reduced [2Fe-2S]-[ferredoxin] + 2 S-adenosyl-L-methionine = (sulfur carrier)-H + biotin + 2 5'-deoxyadenosine + 2 L-methionine + 2 oxidized [2Fe-2S]-[ferredoxin]. The protein operates within cofactor biosynthesis; biotin biosynthesis; biotin from 7,8-diaminononanoate: step 2/2. Catalyzes the conversion of dethiobiotin (DTB) to biotin by the insertion of a sulfur atom into dethiobiotin via a radical-based mechanism. The protein is Biotin synthase of Acidiphilium cryptum (strain JF-5).